A 314-amino-acid polypeptide reads, in one-letter code: MIRTLYWENNRLFLLDQTKLPHTIEYVECRTYTDVIDGIKTMKVRGAPAIGVSAAYGMALGELAGEDMDVIGDEIKSARPTAVNLFWAVDKVLDLVSRGKSAVDVAIEMEKDDVAINKKIGEYGNSIIDDNDTILTHCNAGALACAGYGTALGVIRAAHEANKNIDVICDETRPVLQGARLSVFEMQQENIPVRLIVDGAAGHMMQKGEVDKVIIGADRVAKDGVANKIGSLMVALAAKRYDIPFYVAAPMSTFDFENNIFDTIIEQRLPEEVLCINGKYISKKQTNVENPAFDIVESDLITGIITEEGIKKPL.

Substrate is bound by residues 45–47, R79, and Q177; that span reads RGA. The active-site Proton donor is the D218. 227-228 is a substrate binding site; that stretch reads NK.

The protein belongs to the eIF-2B alpha/beta/delta subunits family. MtnA subfamily.

It carries out the reaction 5-(methylsulfanyl)-alpha-D-ribose 1-phosphate = 5-(methylsulfanyl)-D-ribulose 1-phosphate. In terms of biological role, catalyzes the interconversion of methylthioribose-1-phosphate (MTR-1-P) into methylthioribulose-1-phosphate (MTRu-1-P). The polypeptide is Putative methylthioribose-1-phosphate isomerase (Methanosphaera stadtmanae (strain ATCC 43021 / DSM 3091 / JCM 11832 / MCB-3)).